Consider the following 488-residue polypeptide: Probable glycine dehydrogenase (decarboxylating) subunit 2 (488 aa).

N6-(pyridoxal phosphate)lysine is present on lysine 264.

This sequence belongs to the GcvP family. C-terminal subunit subfamily. As to quaternary structure, the glycine cleavage system is composed of four proteins: P, T, L and H. In this organism, the P 'protein' is a heterodimer of two subunits. Pyridoxal 5'-phosphate is required as a cofactor.

The catalysed reaction is N(6)-[(R)-lipoyl]-L-lysyl-[glycine-cleavage complex H protein] + glycine + H(+) = N(6)-[(R)-S(8)-aminomethyldihydrolipoyl]-L-lysyl-[glycine-cleavage complex H protein] + CO2. Functionally, the glycine cleavage system catalyzes the degradation of glycine. The P protein binds the alpha-amino group of glycine through its pyridoxal phosphate cofactor; CO(2) is released and the remaining methylamine moiety is then transferred to the lipoamide cofactor of the H protein. The sequence is that of Probable glycine dehydrogenase (decarboxylating) subunit 2 from Methylococcus capsulatus (strain ATCC 33009 / NCIMB 11132 / Bath).